A 317-amino-acid chain; its full sequence is (R)-citramalyl-CoA lyase (317 aa).

Residues 4–281 (VTIVDVAPRD…PTGIDLSALI (278 aa)) form the Pyruvate carboxyltransferase domain. Arg12 is a substrate binding site. A divalent metal cation contacts are provided by Asp13, His214, and His216. Cys247 is a catalytic residue. Asn256 is an a divalent metal cation binding site.

This sequence belongs to the HMG-CoA lyase family. Homodimer. It depends on Mn(2+) as a cofactor. Co(2+) serves as cofactor. Requires Ni(2+) as cofactor. Mg(2+) is required as a cofactor.

It catalyses the reaction (3R)-citramalyl-CoA = pyruvate + acetyl-CoA. Its activity is regulated as follows. Activated by dithioerythritol (DTE) (in vitro). Functionally, involved in the glyoxylate assimilation cycle used to regenerate acetyl-CoA and produce pyruvate as universal precursor for biosynthesis. Catalyzes the cleavage of (R)-citramalyl-CoA to yield acetyl-CoA and pyruvate. The chain is (R)-citramalyl-CoA lyase (ccl) from Chloroflexus aurantiacus (strain ATCC 29366 / DSM 635 / J-10-fl).